The following is a 370-amino-acid chain: Phosphoserine aminotransferase (370 aa).

Residue Met-1 is modified to N-acetylmethionine. The O-phospho-L-serine site is built by His-44 and Arg-45. N6-acetyllysine is present on Lys-51. Residues Gly-79 and Trp-107 each contribute to the pyridoxal 5'-phosphate site. Position 127 is an N6-acetyllysine (Lys-127). 3 residues coordinate pyridoxal 5'-phosphate: Thr-156, Asp-176, and Gln-199. Lys-200 is modified (N6-(pyridoxal phosphate)lysine). Pyridoxal 5'-phosphate contacts are provided by Asn-241 and Thr-242. 3 positions are modified to N6-acetyllysine: Lys-269, Lys-318, and Lys-323. Ser-331 bears the Phosphoserine mark. Lys-333 is subject to N6-acetyllysine. O-phospho-L-serine-binding residues include His-335, Arg-336, and Arg-342.

It belongs to the class-V pyridoxal-phosphate-dependent aminotransferase family. SerC subfamily. Homodimer. It depends on pyridoxal 5'-phosphate as a cofactor.

The catalysed reaction is O-phospho-L-serine + 2-oxoglutarate = 3-phosphooxypyruvate + L-glutamate. Its pathway is amino-acid biosynthesis; L-serine biosynthesis; L-serine from 3-phospho-D-glycerate: step 2/3. Involved in L-serine biosynthesis via the phosphorylated pathway, a three-step pathway converting the glycolytic intermediate 3-phospho-D-glycerate into L-serine. Catalyzes the second step, that is the pyridoxal 5'-phosphate-dependent transamination of 3-phosphohydroxypyruvate and L-glutamate to O-phosphoserine (OPS) and alpha-ketoglutarate. The chain is Phosphoserine aminotransferase from Mus musculus (Mouse).